A 943-amino-acid polypeptide reads, in one-letter code: Translation initiation factor IF-2 (943 aa).

Positions 46 to 359 (IKGMLSKQSA…MPQRKERPLP (314 aa)) are disordered. The segment covering 57–76 (KAPSSQAAKTPAKAAKTSSA) has biased composition (low complexity). 2 stretches are compositionally biased toward basic and acidic residues: residues 92 to 103 (SNDHADVAEHSQ) and 110 to 124 (AKQE…KTSD). Polar residues predominate over residues 130 to 141 (SKSTILRPRSTQ). The span at 142-190 (TAHTNTNHNRGGNTASANNTANGRNSNRSNNNNNNRSANNANRSGNNNR) shows a compositional bias: low complexity. Basic and acidic residues-rich tracts occupy residues 191–205 (SNER…RFDN), 239–250 (ASERQQPKRQEA), and 259–271 (KRSE…RPRT). 2 stretches are compositionally biased toward low complexity: residues 289 to 299 (PAAAAPKPASA) and 315 to 330 (NFGR…GFNR). A compositionally biased stretch (basic residues) spans 331 to 342 (NNRRNKKNKRRQ). Over residues 346–358 (PKKEMPQRKERPL) the composition is skewed to basic and acidic residues. The tr-type G domain occupies 444-613 (PRPPVVTIMG…LLEADVLELK (170 aa)). The G1 stretch occupies residues 453–460 (GHVDHGKT). A GTP-binding site is contributed by 453 to 460 (GHVDHGKT). Positions 478 to 482 (GITQH) are G2. The tract at residues 499–502 (DTPG) is G3. Residues 499 to 503 (DTPGH) and 553 to 556 (NKID) each bind GTP. The tract at residues 553-556 (NKID) is G4. The tract at residues 589-591 (SAK) is G5.

The protein belongs to the TRAFAC class translation factor GTPase superfamily. Classic translation factor GTPase family. IF-2 subfamily.

It is found in the cytoplasm. In terms of biological role, one of the essential components for the initiation of protein synthesis. Protects formylmethionyl-tRNA from spontaneous hydrolysis and promotes its binding to the 30S ribosomal subunits. Also involved in the hydrolysis of GTP during the formation of the 70S ribosomal complex. In Lacticaseibacillus casei (strain BL23) (Lactobacillus casei), this protein is Translation initiation factor IF-2.